The following is a 48-amino-acid chain: Omega-agatoxin-Aa5a (48 aa).

Intrachain disulfides connect Cys-3/Cys-16, Cys-10/Cys-21, Cys-15/Cys-32, and Cys-23/Cys-30.

Belongs to the neurotoxin 02 (plectoxin) family. As to expression, expressed by the venom gland.

It localises to the secreted. The toxin blocks voltage-gated calcium channels in rat cerebellar granule cells (IC(50)=200 nM). The chain is Omega-agatoxin-Aa5a from Agelenopsis aperta (North American funnel-web spider).